The primary structure comprises 141 residues: Transcriptional regulator MraZ (141 aa).

SpoVT-AbrB domains lie at 5 to 47 (TFNI…KPQD) and 76 to 119 (ANFV…DKKL).

It belongs to the MraZ family. As to quaternary structure, homooctamer. Forms a ring.

It localises to the cytoplasm. It is found in the nucleoid. This chain is Transcriptional regulator MraZ, found in Mycoplasma pneumoniae (strain ATCC 29342 / M129 / Subtype 1) (Mycoplasmoides pneumoniae).